Consider the following 140-residue polypeptide: Large ribosomal subunit protein bL17 (140 aa).

Belongs to the bacterial ribosomal protein bL17 family. As to quaternary structure, part of the 50S ribosomal subunit. Contacts protein L32.

The protein is Large ribosomal subunit protein bL17 of Roseobacter denitrificans (strain ATCC 33942 / OCh 114) (Erythrobacter sp. (strain OCh 114)).